Here is a 124-residue protein sequence, read N- to C-terminus: Holo-[acyl-carrier-protein] synthase (124 aa).

Mg(2+)-binding residues include aspartate 8 and glutamate 57.

The protein belongs to the P-Pant transferase superfamily. AcpS family. Mg(2+) is required as a cofactor.

It is found in the cytoplasm. The catalysed reaction is apo-[ACP] + CoA = holo-[ACP] + adenosine 3',5'-bisphosphate + H(+). In terms of biological role, transfers the 4'-phosphopantetheine moiety from coenzyme A to a Ser of acyl-carrier-protein. In Leptospira borgpetersenii serovar Hardjo-bovis (strain JB197), this protein is Holo-[acyl-carrier-protein] synthase.